Reading from the N-terminus, the 186-residue chain is ATP synthase subunit delta (186 aa).

This sequence belongs to the ATPase delta chain family. F-type ATPases have 2 components, F(1) - the catalytic core - and F(0) - the membrane proton channel. F(1) has five subunits: alpha(3), beta(3), gamma(1), delta(1), epsilon(1). F(0) has three main subunits: a(1), b(2) and c(10-14). The alpha and beta chains form an alternating ring which encloses part of the gamma chain. F(1) is attached to F(0) by a central stalk formed by the gamma and epsilon chains, while a peripheral stalk is formed by the delta and b chains.

It is found in the cell membrane. F(1)F(0) ATP synthase produces ATP from ADP in the presence of a proton or sodium gradient. F-type ATPases consist of two structural domains, F(1) containing the extramembraneous catalytic core and F(0) containing the membrane proton channel, linked together by a central stalk and a peripheral stalk. During catalysis, ATP synthesis in the catalytic domain of F(1) is coupled via a rotary mechanism of the central stalk subunits to proton translocation. Functionally, this protein is part of the stalk that links CF(0) to CF(1). It either transmits conformational changes from CF(0) to CF(1) or is implicated in proton conduction. The chain is ATP synthase subunit delta from Wolbachia pipientis wMel.